The primary structure comprises 463 residues: RuvB-like 2 (463 aa).

77–84 (GQPGTGKT) lines the ATP pocket.

This sequence belongs to the RuvB family. In terms of assembly, forms homohexameric rings. Can form a dodecamer with ruvbl1 made of two stacked hexameric rings. Component of the chromatin-remodeling Ino80 complex. Component of some MLL1/MLL complex.

The protein resides in the nucleus. The protein localises to the dynein axonemal particle. It catalyses the reaction ATP + H2O = ADP + phosphate + H(+). Has double-stranded DNA-stimulated ATPase activity. Has ATP-dependent DNA helicase (5' to 3') activity suggesting a role in nuclear processes such as recombination and transcription. Represses gene activation mediated by beta-catenin. Proposed core component of the chromatin remodeling Ino80 complex which exhibits DNA- and nucleosome-activated ATPase activity and catalyzes ATP-dependent nucleosome sliding. Involved in the endoplasmic reticulum (ER)-associated degradation (ERAD) pathway where it negatively regulates expression of ER stress response genes. May act as a regulator of embryonic heart growth. This is RuvB-like 2 (ruvbl2) from Danio rerio (Zebrafish).